A 422-amino-acid polypeptide reads, in one-letter code: Killer cell immunoglobulin-like receptor 3DL1 (422 aa).

An N-terminal signal peptide occupies residues 1 to 21; the sequence is MMFEFLSLLCSGFFLVQRMSA. Topologically, residues 22–329 are extracellular; that stretch reads HMGSYDKPFL…KNLHIQIGLL (308 aa). 3 consecutive Ig-like C2-type domains span residues 42 to 100, 135 to 202, and 237 to 300; these read GQNV…HHQY, GENV…YNHS, and EQNM…FKNS. Asparagine 44 is a glycosylation site (N-linked (GlcNAc...) asparagine). Residues cysteine 49 and cysteine 95 are joined by a disulfide bond. Asparagine 137 carries an N-linked (GlcNAc...) asparagine glycan. A disulfide bridge connects residues cysteine 142 and cysteine 195. N-linked (GlcNAc...) asparagine glycans are attached at residues asparagine 200 and asparagine 239. Residues cysteine 244 and cysteine 293 are joined by a disulfide bond. N-linked (GlcNAc...) asparagine glycosylation occurs at asparagine 299. Residues 330–350 traverse the membrane as a helical segment; sequence VTMVLVIVVIIIIIIIIIIII. Topologically, residues 351 to 422 are cytoplasmic; sequence YYYYFSKKSS…DTVVYTEVMI (72 aa).

It belongs to the immunoglobulin superfamily.

It localises to the cell membrane. Its function is as follows. Receptor on natural killer (NK) cells. Inhibits the activity of NK cells thus preventing cell lysis. In Rattus norvegicus (Rat), this protein is Killer cell immunoglobulin-like receptor 3DL1 (Kir3dl1).